Here is a 365-residue protein sequence, read N- to C-terminus: Outer capsid protein sigma-3 (365 aa).

The segment at 51-73 (CMHCLGVVGSLQRKLKHLPHHRC) adopts a CCHC-type zinc-finger fold.

The protein belongs to the orthoreovirus sigma-3 protein family. In terms of assembly, heterohexamer of three sigma-3 and three Mu-1 proteins. The RNA-binding form is probably a homodimer. In terms of processing, cleaved during virus the endosomal proteolytic disassembly of the outer capsid.

Its subcellular location is the virion. It is found in the host cytoplasm. It localises to the host nucleus. Functionally, stimulates translation by blocking the activation of the dsRNA-dependent protein kinase EIF2AK2/PKR, thereby inhibiting the host interferon response. Sigma3 prevents the activation of EIF2AK2 by competing with the kinase for dsRNA-binding. In terms of biological role, the viral outer shell polypeptides, of which sigma-3 is one, impose structural constraints that prevent elongation of nascent transcripts by the RNA-dependent RNA polymerase lambda-3. This Reovirus type 3 (strain Dearing) (T3D) protein is Outer capsid protein sigma-3 (S4).